The sequence spans 348 residues: MRSILVIPSFVAVLNAFSLFPKPHDDFKYLITFGDSYTDNGRLGYYGSHQAHGPPPGVMPPEANVTASGGLQWPQYVEASTGATLYDYAIAGATCDNNNVERWAAFMNANYPSIITDEIPSFKADRKTKLYRGVTSANTVYALWIGTNDLSYTGILSDSQVKGTNITTYIDCLWNVFDAIHAAGGRRFVILNNNALQLTGLYRPLSDGGAGDNQFWQNKTLYNQTEYAQKMLEYTTSSNTMIDYGVPFHLLVKNRWPGSKVAVYDIHSLIMDIYNQPSRYLEPPHNVVGYYKHCDVNGTNCLYGPGRLDSYLWYDELHPSNIIASYIAREFLNVVSGRSKYGTYWEHW.

Positions 1–16 (MRSILVIPSFVAVLNA) are cleaved as a signal peptide. N-linked (GlcNAc...) asparagine glycosylation is found at asparagine 64, asparagine 165, asparagine 218, asparagine 223, and asparagine 297.

Belongs to the carbohydrate esterase CE16 family. In terms of processing, N-glycosylated.

The protein localises to the secreted. The enzyme catalyses an acetyl ester + H2O = an aliphatic alcohol + acetate + H(+). In terms of biological role, acetylesterase that acts as an exo-deacetylase. Shows activity towards naphtyl acetate, triacetin, as well as towards glucose- and xylose acetates. Liberates acetic acid from xylo-oligomers. This chain is Acetylesterase, found in Hypocrea jecorina (Trichoderma reesei).